A 306-amino-acid polypeptide reads, in one-letter code: Probable C-terminal domain small phosphatase (306 aa).

The segment covering 1–36 (MNSSPITQVSNPNDSLNHSSTNLIPSSHNSLNNYPQ) has biased composition (polar residues). 2 disordered regions span residues 1–45 (MNSS…NRKK) and 61–116 (NDQN…NKDS). Low complexity predominate over residues 61 to 111 (NDQNNGNNINTDNGASNNDKLQQQKQYNQQQQQQYNQHQQQQQQQQQQQQY). Residues 132–290 (RHVGLKTLVL…LDLLPLLDDL (159 aa)) form the FCP1 homology domain. Asp142 functions as the 4-aspartylphosphate intermediate in the catalytic mechanism. Mg(2+)-binding residues include Asp142, Asp144, and Asn253. Asp144 acts as the Proton donor in catalysis.

As to quaternary structure, monomer. Mg(2+) serves as cofactor.

The protein resides in the nucleus. The catalysed reaction is O-phospho-L-seryl-[protein] + H2O = L-seryl-[protein] + phosphate. The enzyme catalyses O-phospho-L-threonyl-[protein] + H2O = L-threonyl-[protein] + phosphate. May function as a phosphatase involved in the regulation of cell growth and differentiation. In Dictyostelium discoideum (Social amoeba), this protein is Probable C-terminal domain small phosphatase (fcpA).